The primary structure comprises 380 residues: uncharacterized protein (380 aa).

The Peptidase M14 domain occupies 111–369; that stretch reads APYSMERHHD…DCLAILAEMI (259 aa). The Zn(2+) site is built by histidine 164, glutamate 167, and histidine 257. Catalysis depends on glutamate 333, which acts as the Proton donor/acceptor.

Zn(2+) is required as a cofactor.

This is an uncharacterized protein from Zymomonas mobilis subsp. mobilis (strain ATCC 31821 / ZM4 / CP4).